Consider the following 257-residue polypeptide: 4-chloro-allylglycine synthase (257 aa).

Residues glutamate 112, histidine 119, glutamate 173, histidine 203, glutamate 207, and histidine 210 each coordinate Fe cation.

The cofactor is Fe(2+).

It carries out the reaction 4-chloro-L-lysine + AH2 + O2 = L-2-amino-4-chloropent-4-enoate + formaldehyde + A + NH4(+) + H2O. It participates in amino-acid metabolism. It functions in the pathway antibiotic biosynthesis. Its function is as follows. Involved in the biosynthesis of terminal alkyne-containing amino acids such as L-propargylglycine (Pra) and L-beta-ethynylserine, that are produced as antibiotics by S.cattleya. Catalyzes an oxidative C-C bond cleavage in 4-chloro-L-lysine to form 4-chloro-allyl-L-glycine (also named L-2-amino-4-chloropent-4-enoate), with release of formaldehyde and ammonia. Is also able to react with L-lysine directly to produce allylglycine in vitro. The protein is 4-chloro-allylglycine synthase of Streptantibioticus cattleyicolor (strain ATCC 35852 / DSM 46488 / JCM 4925 / NBRC 14057 / NRRL 8057) (Streptomyces cattleya).